The primary structure comprises 365 residues: 3-dehydroquinate synthase (365 aa).

NAD(+) contacts are provided by residues 106–110 (GVIGD), 130–131 (TT), Lys-142, Lys-151, and 169–172 (FFAT). The Zn(2+) site is built by Glu-184, His-247, and His-264.

This sequence belongs to the sugar phosphate cyclases superfamily. Dehydroquinate synthase family. NAD(+) is required as a cofactor. Co(2+) serves as cofactor. It depends on Zn(2+) as a cofactor.

The protein localises to the cytoplasm. The enzyme catalyses 7-phospho-2-dehydro-3-deoxy-D-arabino-heptonate = 3-dehydroquinate + phosphate. The protein operates within metabolic intermediate biosynthesis; chorismate biosynthesis; chorismate from D-erythrose 4-phosphate and phosphoenolpyruvate: step 2/7. Functionally, catalyzes the conversion of 3-deoxy-D-arabino-heptulosonate 7-phosphate (DAHP) to dehydroquinate (DHQ). This Listeria innocua serovar 6a (strain ATCC BAA-680 / CLIP 11262) protein is 3-dehydroquinate synthase.